Reading from the N-terminus, the 682-residue chain is L-type lectin-domain containing receptor kinase VI.2 (682 aa).

The N-terminal stretch at 1–26 (MGTQRSMFIVSFLFKLFLFLSVHVRA) is a signal peptide. The Extracellular portion of the chain corresponds to 27–310 (QRTTTNFAFR…AKKEGLNSQV (284 aa)). A legume-lectin like region spans residues 29–277 (TTTNFAFRGF…AHYVMGWSFS (249 aa)). A helical transmembrane segment spans residues 311–331 (IVMIVALSAVMLVMLVLLFFF). The Cytoplasmic segment spans residues 332–682 (VMYKKRLGQE…RVSSTSRISQ (351 aa)). A Protein kinase domain is found at 367-641 (FKKTGIIGTG…LRYLNGEENV (275 aa)). ATP is bound by residues 373–381 (IGTGGFGTV) and lysine 395. Aspartate 494 (proton acceptor) is an active-site residue.

In the C-terminal section; belongs to the protein kinase superfamily. Ser/Thr protein kinase family. This sequence in the N-terminal section; belongs to the leguminous lectin family. In terms of tissue distribution, strongly expressed in the vascular system and trichomes of the leaves. Also expressed in guard cells, anthers, stigmas and germinating seeds, but not found in petals or roots. Increased susceptibility to the bacteria Pseudomonas syringae, characterized by stronger necrotic symptoms and higher bacterial proliferation.

It is found in the cell membrane. The catalysed reaction is L-seryl-[protein] + ATP = O-phospho-L-seryl-[protein] + ADP + H(+). The enzyme catalyses L-threonyl-[protein] + ATP = O-phospho-L-threonyl-[protein] + ADP + H(+). Involved in negative regulation of abscisic acid response in seed germination. Its function is as follows. Involved in resistance response to the pathogenic bacteria Pseudomonas syringae. The sequence is that of L-type lectin-domain containing receptor kinase VI.2 from Arabidopsis thaliana (Mouse-ear cress).